The primary structure comprises 505 residues: Cytochrome c oxidase subunit 1 (505 aa).

Residues 14-34 (LLYLVFAFFGGLLGTSLSMLI) form a helical membrane-spanning segment. E37 and G42 together coordinate Ca(2+). The next 6 membrane-spanning stretches (helical) occupy residues 55–75 (VIIT…ALFG), 98–118 (NISF…TLVE), 143–163 (AILS…NMLV), 180–200 (LFVW…PVLA), 229–249 (LFWF…FGIV), and 261–281 (VFGL…GFIV). H60 lines the Fe(II)-heme a pocket. Cu cation contacts are provided by H235 and Y239. Residues 235-239 (HPEVY) constitute a cross-link (1'-histidyl-3'-tyrosine (His-Tyr)). Y239 is a binding site for O2. Residues H284 and H285 each contribute to the Cu cation site. 2 helical membrane passes run 302–322 (ATMI…ATIY) and 332–352 (MWFA…GVVL). Residues H362 and D363 each contribute to the Mg(2+) site. H370 serves as a coordination point for heme a3. Residue H372 coordinates Fe(II)-heme a. A run of 3 helical transmembrane segments spans residues 374–394 (VLSM…GNLI), 408–428 (FWLL…LGLA), and 446–466 (AVSS…ATTF).

This sequence belongs to the heme-copper respiratory oxidase family. In terms of assembly, component of the cytochrome c oxidase (complex IV, CIV), a multisubunit enzyme composed of a catalytic core of 3 subunits and several supernumerary subunits. The complex exists as a monomer or a dimer and forms supercomplexes (SCs) in the inner mitochondrial membrane with ubiquinol-cytochrome c oxidoreductase (cytochrome b-c1 complex, complex III, CIII). The cofactor is heme. Cu cation is required as a cofactor.

Its subcellular location is the mitochondrion inner membrane. The enzyme catalyses 4 Fe(II)-[cytochrome c] + O2 + 8 H(+)(in) = 4 Fe(III)-[cytochrome c] + 2 H2O + 4 H(+)(out). Its pathway is energy metabolism; oxidative phosphorylation. Its function is as follows. Component of the cytochrome c oxidase, the last enzyme in the mitochondrial electron transport chain which drives oxidative phosphorylation. The respiratory chain contains 3 multisubunit complexes succinate dehydrogenase (complex II, CII), ubiquinol-cytochrome c oxidoreductase (cytochrome b-c1 complex, complex III, CIII) and cytochrome c oxidase (complex IV, CIV), that cooperate to transfer electrons derived from NADH and succinate to molecular oxygen, creating an electrochemical gradient over the inner membrane that drives transmembrane transport and the ATP synthase. Cytochrome c oxidase is the component of the respiratory chain that catalyzes the reduction of oxygen to water. Electrons originating from reduced cytochrome c in the intermembrane space (IMS) are transferred via the dinuclear copper A center (CU(A)) of subunit 2 and heme A of subunit 1 to the active site in subunit 1, a binuclear center (BNC) formed by heme A3 and copper B (CU(B)). The BNC reduces molecular oxygen to 2 water molecules using 4 electrons from cytochrome c in the IMS and 4 protons from the mitochondrial matrix. The sequence is that of Cytochrome c oxidase subunit 1 (COX1) from Chlamydomonas reinhardtii (Chlamydomonas smithii).